The chain runs to 367 residues: Phosphoribosylaminoimidazole-succinocarboxamide synthase (367 aa).

It belongs to the SAICAR synthetase family.

The enzyme catalyses 5-amino-1-(5-phospho-D-ribosyl)imidazole-4-carboxylate + L-aspartate + ATP = (2S)-2-[5-amino-1-(5-phospho-beta-D-ribosyl)imidazole-4-carboxamido]succinate + ADP + phosphate + 2 H(+). Its pathway is purine metabolism; IMP biosynthesis via de novo pathway; 5-amino-1-(5-phospho-D-ribosyl)imidazole-4-carboxamide from 5-amino-1-(5-phospho-D-ribosyl)imidazole-4-carboxylate: step 1/2. This is Phosphoribosylaminoimidazole-succinocarboxamide synthase from Aliivibrio fischeri (strain MJ11) (Vibrio fischeri).